The sequence spans 398 residues: Acetate kinase (398 aa).

Residue N7 participates in Mg(2+) binding. Residue K14 coordinates ATP. Residue R92 coordinates substrate. D149 serves as the catalytic Proton donor/acceptor. ATP-binding positions include 208–212 (HLGNG), 283–285 (DCR), and 331–335 (GIGEN). E385 contributes to the Mg(2+) binding site.

The protein belongs to the acetokinase family. Homodimer. The cofactor is Mg(2+). Mn(2+) serves as cofactor.

The protein resides in the cytoplasm. The catalysed reaction is acetate + ATP = acetyl phosphate + ADP. It functions in the pathway metabolic intermediate biosynthesis; acetyl-CoA biosynthesis; acetyl-CoA from acetate: step 1/2. Its function is as follows. Catalyzes the formation of acetyl phosphate from acetate and ATP. Can also catalyze the reverse reaction. This is Acetate kinase from Fusobacterium nucleatum subsp. nucleatum (strain ATCC 25586 / DSM 15643 / BCRC 10681 / CIP 101130 / JCM 8532 / KCTC 2640 / LMG 13131 / VPI 4355).